The primary structure comprises 223 residues: Pyridoxine/pyridoxamine 5'-phosphate oxidase (223 aa).

Residues arginine 13–tyrosine 16 and lysine 73 each bind substrate. FMN contacts are provided by residues arginine 68–lysine 73, tyrosine 83–threonine 84, lysine 90, and glutamine 112. Residues tyrosine 130, arginine 134, and serine 138 each contribute to the substrate site. Residues glutamine 147–serine 148 and tryptophan 193 contribute to the FMN site. Arginine 199–histidine 201 lines the substrate pocket. Arginine 203 is an FMN binding site.

Belongs to the pyridoxamine 5'-phosphate oxidase family. As to quaternary structure, homodimer. FMN serves as cofactor.

The catalysed reaction is pyridoxamine 5'-phosphate + O2 + H2O = pyridoxal 5'-phosphate + H2O2 + NH4(+). The enzyme catalyses pyridoxine 5'-phosphate + O2 = pyridoxal 5'-phosphate + H2O2. The protein operates within cofactor metabolism; pyridoxal 5'-phosphate salvage; pyridoxal 5'-phosphate from pyridoxamine 5'-phosphate: step 1/1. Its pathway is cofactor metabolism; pyridoxal 5'-phosphate salvage; pyridoxal 5'-phosphate from pyridoxine 5'-phosphate: step 1/1. Catalyzes the oxidation of either pyridoxine 5'-phosphate (PNP) or pyridoxamine 5'-phosphate (PMP) into pyridoxal 5'-phosphate (PLP). In Rhodopirellula baltica (strain DSM 10527 / NCIMB 13988 / SH1), this protein is Pyridoxine/pyridoxamine 5'-phosphate oxidase.